The chain runs to 997 residues: ER membrane protein complex subunit 1 (997 aa).

The N-terminal stretch at 1-23 is a signal peptide; the sequence is MAVAVASGFWIWAAVLLVPAAAV. At 24–966 the chain is on the lumenal side; it reads YEDQVGKFDW…FDVLKDDYDY (943 aa). 2 disulfide bridges follow: Cys228/Cys238 and Cys339/Cys369. Asn917 is a glycosylation site (N-linked (GlcNAc...) asparagine). The chain crosses the membrane as a helical span at residues 967-987; that stretch reads VLISSVLFGLVFATMITKRLA. Over 988–997 the chain is Cytoplasmic; it reads QVKLLNRAWR.

It belongs to the EMC1 family. Component of the ER membrane protein complex (EMC).

It localises to the endoplasmic reticulum membrane. Its function is as follows. Part of the endoplasmic reticulum membrane protein complex (EMC) that enables the energy-independent insertion into endoplasmic reticulum membranes of newly synthesized membrane proteins. Preferentially accommodates proteins with transmembrane domains that are weakly hydrophobic or contain destabilizing features such as charged and aromatic residues. Involved in the cotranslational insertion of multi-pass membrane proteins in which stop-transfer membrane-anchor sequences become ER membrane spanning helices. It is also required for the post-translational insertion of tail-anchored/TA proteins in endoplasmic reticulum membranes. By mediating the proper cotranslational insertion of N-terminal transmembrane domains in an N-exo topology, with translocated N-terminus in the lumen of the ER, controls the topology of multi-pass membrane proteins like the G protein-coupled receptors. By regulating the insertion of various proteins in membranes, it is indirectly involved in many cellular processes. The polypeptide is ER membrane protein complex subunit 1 (Emc1) (Mus musculus (Mouse)).